The chain runs to 189 residues: Putative manganese efflux pump MntP (189 aa).

The next 6 membrane-spanning stretches (helical) occupy residues 3-23 (IVST…AAVS), 41-61 (MIFG…GRVA), 62-82 (ADYV…FLGI), 103-123 (SFIL…SVGV), 132-152 (IVPV…AGVM), and 167-187 (IIGG…HLYG).

The protein belongs to the MntP (TC 9.B.29) family.

Its subcellular location is the cell inner membrane. Its function is as follows. Probably functions as a manganese efflux pump. The polypeptide is Putative manganese efflux pump MntP (Methylobacillus flagellatus (strain ATCC 51484 / DSM 6875 / VKM B-1610 / KT)).